We begin with the raw amino-acid sequence, 332 residues long: Phenol 2-monooxygenase, oxygenase component MhpL (332 aa).

This sequence belongs to the TmoE/XamoE family.

It carries out the reaction phenol + NADH + O2 + H(+) = catechol + NAD(+) + H2O. It participates in aromatic compound metabolism; phenol degradation. In terms of biological role, part of a multicomponent enzyme which catalyzes the degradation of phenol and some of its methylated derivatives. The protein is Phenol 2-monooxygenase, oxygenase component MhpL (mphL) of Acinetobacter pittii (strain PHEA-2).